Consider the following 1354-residue polypeptide: Tensin homolog (1354 aa).

The Phosphatase tensin-type domain maps to 38–207 (MKDRKEGVQV…GYFSSLLSGR (170 aa)). The active-site Phosphocysteine intermediate is the Cys-144. The region spanning 212–337 (SDPLYLHNII…VTVELVVSHT (126 aa)) is the C2 tensin-type domain. Disordered stretches follow at residues 380-442 (EYSE…DVVP), 597-616 (STLQ…RTLN), 638-660 (SNTA…SVQL), 692-720 (DVRG…NNTP), 734-754 (SVTT…EADA), 794-879 (AANN…DRQR), and 1015-1035 (NGER…HNGY). Residues 391-401 (SSKSANPINNN) are compositionally biased toward polar residues. Residues 408–417 (VGPPVPPKPS) are compositionally biased toward pro residues. Composition is skewed to polar residues over residues 704–720 (HNAS…NNTP), 734–747 (SVTT…STPS), and 794–804 (AANNDENQHNL). The span at 821–843 (AEFRREEERLRNTRSPYGEERWR) shows a compositional bias: basic and acidic residues. Over residues 1017–1033 (ERGGSGHAAGGGGGGHN) the composition is skewed to gly residues. Residues 1083 to 1187 (WYKPTISREQ…ALPTKLVLPD (105 aa)) enclose the SH2 domain. The 145-residue stretch at 1209–1353 (ACNVVYVGSV…NKVMLAQKNR (145 aa)) folds into the PTB domain.

Belongs to the PTEN phosphatase protein family. In terms of assembly, may interact (via SH2 domain) with receptor svh-2 (when tyrosine-phosphorylated). May interact (via C-terminus) with integrin pat-3. In terms of tissue distribution, expressed in ventral motor neurons, including ventral and dorsal D-type neurons, and in a subset of cells in the head.

It is found in the cell projection. The protein resides in the axon. The enzyme catalyses O-phospho-L-tyrosyl-[protein] + H2O = L-tyrosyl-[protein] + phosphate. In terms of biological role, probable phosphatase which regulates axon regeneration after injury by linking the svh-2 and integrin signaling pathways. Functionally, not involved in axon regeneration after injury. In Caenorhabditis elegans, this protein is Tensin homolog.